Consider the following 257-residue polypeptide: Triosephosphate isomerase (257 aa).

Positions 12 and 14 each coordinate substrate. His98 functions as the Electrophile in the catalytic mechanism. Glu169 (proton acceptor) is an active-site residue.

Belongs to the triosephosphate isomerase family. As to quaternary structure, homodimer.

It catalyses the reaction D-glyceraldehyde 3-phosphate = dihydroxyacetone phosphate. It participates in carbohydrate biosynthesis; gluconeogenesis. It functions in the pathway carbohydrate degradation; glycolysis; D-glyceraldehyde 3-phosphate from glycerone phosphate: step 1/1. This chain is Triosephosphate isomerase (tpiA), found in Dictyostelium discoideum (Social amoeba).